The primary structure comprises 108 residues: Peptidyl-prolyl cis-trans isomerase FKBP1B (108 aa).

One can recognise a PPIase FKBP-type domain in the interval 20–108; it reads GQTCVVHYTG…IFDVELLNLE (89 aa).

Identified in a complex composed of RYR2, FKBP1B, PKA catalytic subunit, PRKAR2A, AKAP6, and the protein phosphatases PP2A and PP1. Interacts directly with RYR2.

It is found in the cytoplasm. The protein resides in the sarcoplasmic reticulum. It catalyses the reaction [protein]-peptidylproline (omega=180) = [protein]-peptidylproline (omega=0). Its activity is regulated as follows. Inhibited by both FK506 and rapamycin. Its function is as follows. Has the potential to contribute to the immunosuppressive and toxic effects of FK506 and rapamycin. PPIases accelerate the folding of proteins. It catalyzes the cis-trans isomerization of proline imidic peptide bonds in oligopeptides. This is Peptidyl-prolyl cis-trans isomerase FKBP1B (FKBP1B) from Bos taurus (Bovine).